Reading from the N-terminus, the 157-residue chain is MSSSNKKSLNFPVLVDPRTGKLVISNERCRTPCALFFVTYKCLLSCSAGCSSFSFSLSFCNNDPKFTSVLGLGTTGLSFTAMTGNLEDDFEKCATFVLACRGSGCGCGCRPDSFIFTASPLEALLPLQKPLGNEGGNRVQFLDPGFSIRSISKFIFT.

This is an uncharacterized protein from Saccharomyces cerevisiae (strain ATCC 204508 / S288c) (Baker's yeast).